We begin with the raw amino-acid sequence, 273 residues long: ATP synthase subunit a (273 aa).

Helical transmembrane passes span 41-61, 101-121, 122-142, 143-163, 183-203, 221-241, and 247-267; these read ILNIDSIFFTLLLGIIFLLIF, LIAPLALTIFIWIFLMNLMDL, LAVDMLPYIAMYILHIPALRV, VPSADINITLSLALGVFILII, PFNHLIFIPLNFILESVSLLS, LVFILIAGLLPWWSQWIISVP, and IIVITLQAFIFMVLTVVYIAM.

The protein belongs to the ATPase A chain family. F-type ATPases have 2 components, CF(1) - the catalytic core - and CF(0) - the membrane proton channel. CF(1) has five subunits: alpha(3), beta(3), gamma(1), delta(1), epsilon(1). CF(0) has three main subunits: a(1), b(2) and c(9-12). The alpha and beta chains form an alternating ring which encloses part of the gamma chain. CF(1) is attached to CF(0) by a central stalk formed by the gamma and epsilon chains, while a peripheral stalk is formed by the delta and b chains.

Its subcellular location is the cell membrane. In terms of biological role, key component of the proton channel; it plays a direct role in the translocation of protons across the membrane. In Baumannia cicadellinicola subsp. Homalodisca coagulata, this protein is ATP synthase subunit a.